Consider the following 1084-residue polypeptide: Histone deacetylase 4 (1084 aa).

Residues 67 to 177 (REQQLQQELL…STEVKMKLQE (111 aa)) are a coiled coil. The segment at 118 to 313 (MLAMKHQQEL…NNSSGSVSAE (196 aa)) is interaction with MEF2A. Residues 133-163 (KLERHRQEQELEKQHREQKLQQLKNKEKGKE) are compositionally biased toward basic and acidic residues. 3 disordered regions span residues 133–166 (KLER…ESAV), 206–226 (TQHS…TSYN), and 240–315 (PLRK…AENG). Ser-210 bears the Phosphoserine mark. Ser-246 is modified (phosphoserine; by CaMK4 and SIK1). Basic and acidic residues predominate over residues 259 to 274 (KVAERRSSPLLRRKDG). Over residues 290–312 (SACSSAPGSGPSSPNNSSGSVSA) the composition is skewed to low complexity. Positions 349 to 354 (PSLPNI) match the PxLPxI/L motif; mediates interaction with ANKRA2 and 14-3-3 proteins motif. Ser-350 carries the post-translational modification Phosphoserine. Ser-467 is subject to Phosphoserine; by CaMK4 and SIK1. Disordered stretches follow at residues 509–531 (PKPS…ELRE), 548–585 (KEAH…QPSE), and 626–646 (PLSR…VQEP). Residues 516-531 (RQPESHPEETEEELRE) show a composition bias toward basic and acidic residues. Lys-559 is covalently cross-linked (Glycyl lysine isopeptide (Lys-Gly) (interchain with G-Cter in SUMO)). Position 565 is a phosphoserine (Ser-565). A compositionally biased stretch (polar residues) spans 629-641 (RAQSSPASATFPV). Position 632 is a phosphoserine; by CaMK4 (Ser-632). A Phosphoserine modification is found at Ser-633. Residues 655-1084 (GLVYDTLMLK…EEPMEEEPPL (430 aa)) are histone deacetylase. Cys-667, Cys-669, His-675, and Cys-751 together coordinate Zn(2+). His-803 is an active-site residue. The short motif at 1051–1084 (EEAETVTAMASLSVGVKPAEKRPDEEPMEEEPPL) is the Nuclear export signal element. The interval 1061–1084 (SLSVGVKPAEKRPDEEPMEEEPPL) is disordered.

The protein belongs to the histone deacetylase family. HD type 2 subfamily. As to quaternary structure, homodimer. Homodimerization via its N-terminal domain. Interacts with MEF2A. Interacts with MEF2C and MEF2D. Interacts with AHRR. Interacts with NR2C1. Interacts with HDAC7. Interacts with a 14-3-3 chaperone proteins in a phosphorylation dependent manner. Interacts with 14-3-3 protein YWHAB. Interacts with BTBD14B. Interacts with KDM5B. Interacts with MYOCD. Interacts with MORC2. Interacts (via PxLPxI/L motif) with ANKRA2 (via ankyrin repeats). Interacts with CUL7 (as part of the 3M complex); negatively regulated by ANKRA2. Interacts with EP300 in the presence of TFAP2C. Interacts with HSPA1A and HSPA1B leading to their deacetylation at 'Lys-77'. Interacts with ZBTB7B; the interaction allows the recruitment of HDAC4 on CD8 loci for deacetylation and possible inhibition of CD8 genes expression. Interacts with DHX36. Interacts with SIK3; this interaction leads to HDAC4 retention in the cytoplasm. Interacts with ZNF638. Post-translationally, phosphorylated by CaMK4 at Ser-246, Ser-467 and Ser-632. Phosphorylation at other residues by CaMK2D is required for the interaction with 14-3-3. Phosphorylation at Ser-350, within the PxLPxI/L motif, impairs the binding of ANKRA2 but generates a high-affinity docking site for 14-3-3. In terms of processing, sumoylation on Lys-559 is promoted by the E3 SUMO-protein ligase RANBP2, and prevented by phosphorylation by CaMK4. Ubiquitous.

The protein resides in the nucleus. The protein localises to the cytoplasm. The enzyme catalyses N(6)-acetyl-L-lysyl-[histone] + H2O = L-lysyl-[histone] + acetate. Its function is as follows. Responsible for the deacetylation of lysine residues on the N-terminal part of the core histones (H2A, H2B, H3 and H4). Histone deacetylation gives a tag for epigenetic repression and plays an important role in transcriptional regulation, cell cycle progression and developmental events. Histone deacetylases act via the formation of large multiprotein complexes. Involved in muscle maturation via its interaction with the myocyte enhancer factors such as MEF2A, MEF2C and MEF2D. Involved in the MTA1-mediated epigenetic regulation of ESR1 expression in breast cancer. Deacetylates HSPA1A and HSPA1B at 'Lys-77' leading to their preferential binding to co-chaperone STUB1. In Homo sapiens (Human), this protein is Histone deacetylase 4.